A 414-amino-acid chain; its full sequence is Na(+)-translocating NADH-quinone reductase subunit B (414 aa).

4 helical membrane passes run tryptophan 23–valine 40, isoleucine 56–glycine 76, phenylalanine 129–methionine 149, and isoleucine 164–threonine 184. Threonine 236 bears the FMN phosphoryl threonine mark. Transmembrane regions (helical) follow at residues isoleucine 268 to valine 288, isoleucine 297 to serine 317, methionine 325 to threonine 345, tryptophan 358 to tyrosine 378, and glycine 381 to isoleucine 401.

The protein belongs to the NqrB/RnfD family. As to quaternary structure, composed of six subunits; NqrA, NqrB, NqrC, NqrD, NqrE and NqrF. It depends on FMN as a cofactor.

It localises to the cell inner membrane. The enzyme catalyses a ubiquinone + n Na(+)(in) + NADH + H(+) = a ubiquinol + n Na(+)(out) + NAD(+). Its function is as follows. NQR complex catalyzes the reduction of ubiquinone-1 to ubiquinol by two successive reactions, coupled with the transport of Na(+) ions from the cytoplasm to the periplasm. NqrA to NqrE are probably involved in the second step, the conversion of ubisemiquinone to ubiquinol. In Vibrio parahaemolyticus serotype O3:K6 (strain RIMD 2210633), this protein is Na(+)-translocating NADH-quinone reductase subunit B.